An 83-amino-acid chain; its full sequence is Small ribosomal subunit protein eS21 (83 aa).

It belongs to the eukaryotic ribosomal protein eS21 family. Component of the 40S small ribosomal subunit. Interacts with sta.

Its subcellular location is the cytoplasm. The protein localises to the cytosol. It is found in the rough endoplasmic reticulum. May be an associated component of the ribosome rather than a core structural subunit. May act as a translation initiation factor. Has a role in regulation of cell proliferation in the hematopoietic organs and the imaginal disks of larva. In Drosophila erecta (Fruit fly), this protein is Small ribosomal subunit protein eS21 (RpS21).